The primary structure comprises 371 residues: Putative glutamate--cysteine ligase 2 (371 aa).

It belongs to the glutamate--cysteine ligase type 2 family. YbdK subfamily.

The catalysed reaction is L-cysteine + L-glutamate + ATP = gamma-L-glutamyl-L-cysteine + ADP + phosphate + H(+). ATP-dependent carboxylate-amine ligase which exhibits weak glutamate--cysteine ligase activity. The polypeptide is Putative glutamate--cysteine ligase 2 (Paraburkholderia phytofirmans (strain DSM 17436 / LMG 22146 / PsJN) (Burkholderia phytofirmans)).